A 4699-amino-acid chain; its full sequence is Fat-like cadherin-related tumor suppressor homolog (4699 aa).

A signal peptide spans 1–38; sequence MFTMKIKKYVTPVKRKAFTILQWISLLCSLWLIPTVQS. The Extracellular portion of the chain corresponds to 39 to 4285; it reads KADEKHTATL…KNFSIEHISG (4247 aa). Cadherin domains are found at residues 63 to 183, 184 to 291, 288 to 400, 401 to 507, 508 to 613, 614 to 716, 773 to 877, 878 to 980, 981 to 1088, 1089 to 1198, 1194 to 1299, 1300 to 1405, 1408 to 1506, 1507 to 1612, 1613 to 1717, 1718 to 1815, 1816 to 1932, 1933 to 2033, 2034 to 2140, 2141 to 2241, 2242 to 2341, 2342 to 2449, 2450 to 2551, 2552 to 2654, 2655 to 2763, 2764 to 2860, 2861 to 2967, 2968 to 3072, 3068 to 3169, 3170 to 3273, 3274 to 3378, 3379 to 3483, 3484 to 3588, and 3589 to 3696; these read SHSV…SPLF, YPTQ…APEI, APEI…IPIF, TQEI…DPIF, ENVN…RPQF, ERVN…SSIL, VNFP…RPVI, QKTL…APVF, GVQE…APEF, DDFV…KPVY, DKPV…SPEF, DQRV…APLI, KTSE…PPQF, AKDV…HPEF, TAKI…PPKF, PTNN…IPYF, VQNE…PPVF, NERE…NFAF, QRES…CPLF, VNMP…MPVF, EKQF…YPEI, ESDI…APCF, VEPS…SPLF, DQST…VPYF, LLKE…IPTF, EKSS…YPKF, DNTF…APVF, KLPI…KPRY, LKPR…MPIF, SMAQ…PPEF, SMRQ…SPTF, LQNL…APIF, SSSN…PPIV, and TPLE…VIRF. Asn68 and Asn159 each carry an N-linked (GlcNAc...) asparagine glycan. Residue Asn367 is glycosylated (N-linked (GlcNAc...) asparagine). N-linked (GlcNAc...) asparagine glycans are attached at residues Asn782, Asn846, and Asn926. N-linked (GlcNAc...) asparagine glycans are attached at residues Asn1109, Asn1201, Asn1315, Asn1442, Asn1476, and Asn1514. 19 cysteine pairs are disulfide-bonded: Cys3807–Cys3819, Cys3814–Cys3851, Cys3853–Cys3862, Cys3869–Cys3880, Cys3874–Cys3891, Cys3893–Cys3902, Cys4071–Cys4105, Cys4117–Cys4128, Cys4122–Cys4138, Cys4140–Cys4149, Cys4156–Cys4167, Cys4161–Cys4177, Cys4179–Cys4188, Cys4194–Cys4205, Cys4199–Cys4214, Cys4216–Cys4224, Cys4231–Cys4242, Cys4236–Cys4251, and Cys4253–Cys4262. The EGF-like 1 domain maps to 3865 to 3903; it reads TVNACSTDPCSPQRICMPSGSALGYQCVCPKGFSGTYCE. The Laminin G-like domain maps to 3921-4105; that stretch reads AVSFGGKSYA…KRFTNVEFKC (185 aa). EGF-like domains follow at residues 4113-4150, 4152-4189, 4190-4225, and 4227-4263; these read RLGI…KHCE, DLDP…KRCE, YGKF…PTCE, and DVDE…ASCG. The chain crosses the membrane as a helical span at residues 4286-4306; it reads IISGVAVVLVIISCVLCCVVL. Residues 4307-4699 lie on the Cytoplasmic side of the membrane; it reads KRSSSSKRRN…EFLPQQQTNN (393 aa).

In terms of tissue distribution, localizes where basal actin filaments terminate.

The protein localises to the cell membrane. Required for the planar polarity of actin filament orientation at the basal side of ovarian follicle cells. Required for proper egg chamber shape and elongation of the egg chamber during oogenesis. Required for the correct planar polarization of Rab10 within the basal follicle cell epithelium and is therefore indirectly involved in the Rab10-dependent remodeling of the basal membrane during egg chamber elongation. This is Fat-like cadherin-related tumor suppressor homolog (kug) from Drosophila melanogaster (Fruit fly).